Reading from the N-terminus, the 156-residue chain is Transcription elongation factor GreA 1 (156 aa).

Positions 43-74 form a coiled coil; it reads RSENAEYSSAKRDLGRLESRLRYLNKQLQYAQ.

The protein belongs to the GreA/GreB family.

Functionally, necessary for efficient RNA polymerase transcription elongation past template-encoded arresting sites. The arresting sites in DNA have the property of trapping a certain fraction of elongating RNA polymerases that pass through, resulting in locked ternary complexes. Cleavage of the nascent transcript by cleavage factors such as GreA or GreB allows the resumption of elongation from the new 3'terminus. GreA releases sequences of 2 to 3 nucleotides. This is Transcription elongation factor GreA 1 from Lactiplantibacillus plantarum (strain ATCC BAA-793 / NCIMB 8826 / WCFS1) (Lactobacillus plantarum).